A 275-amino-acid polypeptide reads, in one-letter code: 4-hydroxy-tetrahydrodipicolinate reductase (275 aa).

Residues 13–18 (GAAGKM) and 108–110 (GTT) contribute to the NAD(+) site. Catalysis depends on histidine 164, which acts as the Proton donor/acceptor. Residue histidine 165 participates in (S)-2,3,4,5-tetrahydrodipicolinate binding. Lysine 168 (proton donor) is an active-site residue. A (S)-2,3,4,5-tetrahydrodipicolinate-binding site is contributed by 174-175 (GT).

Belongs to the DapB family.

It is found in the cytoplasm. It catalyses the reaction (S)-2,3,4,5-tetrahydrodipicolinate + NAD(+) + H2O = (2S,4S)-4-hydroxy-2,3,4,5-tetrahydrodipicolinate + NADH + H(+). The enzyme catalyses (S)-2,3,4,5-tetrahydrodipicolinate + NADP(+) + H2O = (2S,4S)-4-hydroxy-2,3,4,5-tetrahydrodipicolinate + NADPH + H(+). It functions in the pathway amino-acid biosynthesis; L-lysine biosynthesis via DAP pathway; (S)-tetrahydrodipicolinate from L-aspartate: step 4/4. Its function is as follows. Catalyzes the conversion of 4-hydroxy-tetrahydrodipicolinate (HTPA) to tetrahydrodipicolinate. This Acaryochloris marina (strain MBIC 11017) protein is 4-hydroxy-tetrahydrodipicolinate reductase.